A 356-amino-acid chain; its full sequence is NADH-quinone oxidoreductase subunit H (356 aa).

Transmembrane regions (helical) follow at residues Ile16 to Leu36, Pro52 to Phe72, Leu85 to Pro105, Val117 to Gly137, Ile163 to Ile183, Trp201 to Leu221, Phe254 to Phe274, Ala295 to Val315, and Ile334 to Pro354.

Belongs to the complex I subunit 1 family. NDH-1 is composed of 14 different subunits. Subunits NuoA, H, J, K, L, M, N constitute the membrane sector of the complex.

It localises to the cell inner membrane. It carries out the reaction a quinone + NADH + 5 H(+)(in) = a quinol + NAD(+) + 4 H(+)(out). NDH-1 shuttles electrons from NADH, via FMN and iron-sulfur (Fe-S) centers, to quinones in the respiratory chain. The immediate electron acceptor for the enzyme in this species is believed to be ubiquinone. Couples the redox reaction to proton translocation (for every two electrons transferred, four hydrogen ions are translocated across the cytoplasmic membrane), and thus conserves the redox energy in a proton gradient. This subunit may bind ubiquinone. The protein is NADH-quinone oxidoreductase subunit H of Maricaulis maris (strain MCS10) (Caulobacter maris).